Consider the following 273-residue polypeptide: 3-methyl-2-oxobutanoate hydroxymethyltransferase (273 aa).

Mg(2+) contacts are provided by Asp53 and Asp92. Residues Asp53–Ser54, Asp92, and Lys122 each bind 3-methyl-2-oxobutanoate. Residue Glu124 coordinates Mg(2+). Glu191 functions as the Proton acceptor in the catalytic mechanism.

The protein belongs to the PanB family. In terms of assembly, homodecamer; pentamer of dimers. It depends on Mg(2+) as a cofactor.

The protein resides in the cytoplasm. It catalyses the reaction 3-methyl-2-oxobutanoate + (6R)-5,10-methylene-5,6,7,8-tetrahydrofolate + H2O = 2-dehydropantoate + (6S)-5,6,7,8-tetrahydrofolate. It functions in the pathway cofactor biosynthesis; (R)-pantothenate biosynthesis; (R)-pantoate from 3-methyl-2-oxobutanoate: step 1/2. Its function is as follows. Catalyzes the reversible reaction in which hydroxymethyl group from 5,10-methylenetetrahydrofolate is transferred onto alpha-ketoisovalerate to form ketopantoate. The protein is 3-methyl-2-oxobutanoate hydroxymethyltransferase of Phocaeicola vulgatus (strain ATCC 8482 / DSM 1447 / JCM 5826 / CCUG 4940 / NBRC 14291 / NCTC 11154) (Bacteroides vulgatus).